Reading from the N-terminus, the 220-residue chain is Deoxyribose-phosphate aldolase 2 (220 aa).

The active-site Proton donor/acceptor is the Asp89. Residue Lys151 is the Schiff-base intermediate with acetaldehyde of the active site. The active-site Proton donor/acceptor is Lys180.

The protein belongs to the DeoC/FbaB aldolase family. DeoC type 1 subfamily.

Its subcellular location is the cytoplasm. It catalyses the reaction 2-deoxy-D-ribose 5-phosphate = D-glyceraldehyde 3-phosphate + acetaldehyde. It participates in carbohydrate degradation; 2-deoxy-D-ribose 1-phosphate degradation; D-glyceraldehyde 3-phosphate and acetaldehyde from 2-deoxy-alpha-D-ribose 1-phosphate: step 2/2. Functionally, catalyzes a reversible aldol reaction between acetaldehyde and D-glyceraldehyde 3-phosphate to generate 2-deoxy-D-ribose 5-phosphate. This is Deoxyribose-phosphate aldolase 2 from Staphylococcus aureus (strain MSSA476).